Reading from the N-terminus, the 323-residue chain is Quinolinate synthase (323 aa).

2 residues coordinate iminosuccinate: His38 and Ser55. Cys100 contacts [4Fe-4S] cluster. Residues 126–128 (YIN) and Ser143 contribute to the iminosuccinate site. Cys186 is a [4Fe-4S] cluster binding site. Iminosuccinate-binding positions include 212–214 (HPE) and Thr229. [4Fe-4S] cluster is bound at residue Cys279.

The protein belongs to the quinolinate synthase family. Type 2 subfamily. The cofactor is [4Fe-4S] cluster.

The protein resides in the cytoplasm. The catalysed reaction is iminosuccinate + dihydroxyacetone phosphate = quinolinate + phosphate + 2 H2O + H(+). It participates in cofactor biosynthesis; NAD(+) biosynthesis; quinolinate from iminoaspartate: step 1/1. In terms of biological role, catalyzes the condensation of iminoaspartate with dihydroxyacetone phosphate to form quinolinate. The chain is Quinolinate synthase from Gloeothece citriformis (strain PCC 7424) (Cyanothece sp. (strain PCC 7424)).